We begin with the raw amino-acid sequence, 1475 residues long: Nuclear pore complex protein Nup153 (1475 aa).

The segment covering 1 to 15 has biased composition (gly residues); sequence MASGAGGVGGGGGGK. Disordered stretches follow at residues 1-37, 90-124, and 171-225; these read MASG…QQHQ, DEES…NYPD, and DSTS…TATS. Alanine 2 is modified (N-acetylalanine). Threonine 102 carries the post-translational modification Phosphothreonine. Polar residues-rich tracts occupy residues 107 to 121 and 181 to 190; these read VSNT…TASN and ISTTSGFSSR. Residues serine 182, serine 185, serine 192, serine 203, and serine 209 each carry the phosphoserine modification. Residues 236 to 237 form repeat 1; sequence FG. Positions 236 to 1418 are 29 X 2 AA repeats of F-G; sequence FGTLSPSLGN…NSPSGVFTFG (1183 aa). Phosphoserine occurs at positions 240, 257, 297, 320, 330, 333, 334, 338, and 343. Residue lysine 353 forms a Glycyl lysine isopeptide (Lys-Gly) (interchain with G-Cter in SUMO2) linkage. The residue at position 369 (threonine 369) is a Phosphothreonine. Lysine 384 carries the N6-acetyllysine modification. Threonine 388 is modified (phosphothreonine). 5 positions are modified to phosphoserine: serine 500, serine 516, serine 518, serine 522, and serine 529. O-linked (GlcNAc) serine glycans are attached at residues serine 534 and serine 544. At threonine 588 the chain carries Phosphothreonine. Residues serine 607, serine 614, serine 619, and serine 633 each carry the phosphoserine modification. Repeat 2 spans residues 652–653; that stretch reads FG. Residues 657–687 form a RanBP2-type 1 zinc finger; the sequence is KAGSSWQCDTCLLQNKVTDNKCIACQAAKLS. Residues cysteine 664, cysteine 667, cysteine 678, and cysteine 681 each contribute to the Zn(2+) site. Serine 687 is subject to Phosphoserine. The stretch at 715-716 is repeat 3; the sequence is FG. Lysine 718 is subject to N6-acetyllysine. Residues 722–751 form a RanBP2-type 2 zinc finger; that stretch reads VIGTWDCDTCLVQNKPEAIKCVACETPKPG. 4 residues coordinate Zn(2+): cysteine 728, cysteine 731, cysteine 742, and cysteine 745. The stretch at 786 to 787 is repeat 4; sequence FG. 2 consecutive RanBP2-type zinc fingers follow at residues 793–822 and 851–880; these read PIGS…EKPG and PEGS…AKPG. Residues cysteine 799, cysteine 802, cysteine 813, cysteine 816, cysteine 857, cysteine 860, cysteine 871, and cysteine 874 each contribute to the Zn(2+) site. The residue at position 891 (serine 891) is a Phosphoserine. Repeat unit 5 spans residues 905-906; the sequence is FG. 2 O-linked (GlcNAc) serine glycosylation sites follow: serine 908 and serine 909. Copy 6 of the repeat occupies 926-927; it reads FG. N6-acetyllysine is present on lysine 954. 5 consecutive repeat copies span residues 961–962, 983–984, 1000–1001, 1024–1025, and 1084–1085. Serine 1113 carries an O-linked (GlcNAc) serine glycan. A run of 2 repeats spans residues 1118-1119 and 1135-1136. The segment at 1128–1167 is disordered; the sequence is KCQPVFSFGNSEQTKDENSSKSTFSFSMTKPSEKESEQPA. Over residues 1147-1157 the composition is skewed to low complexity; sequence SKSTFSFSMTK. Threonine 1156 carries O-linked (GlcNAc) threonine glycosylation. 11 repeat units span residues 1173-1174, 1212-1213, 1228-1229, 1240-1241, 1275-1276, 1289-1290, 1291-1292, 1306-1307, 1319-1320, 1327-1328, and 1341-1342. Positions 1311–1402 are disordered; sequence SAPSASPAFG…SAFQFGSSTT (92 aa). Over residues 1321 to 1335 the composition is skewed to polar residues; that stretch reads ANQTPTFGQSQGASQ. Composition is skewed to polar residues over residues 1343-1356 and 1363-1396; these read SISS…TGSQ and GTVS…SAFQ. The tract at residues 1350-1475 is (Microbial infection) Interacts with HIV-1 capsid protein p24 (CA); sequence LFPTGSQPAP…KIKTAVRRRK (126 aa). 5 consecutive repeat copies span residues 1362–1363, 1374–1375, 1383–1384, 1397–1398, and 1417–1418. Polar residues-rich tracts occupy residues 1420 to 1431 and 1438 to 1463; these read NSSTPAASAQPS and FNQS…TSFS. A disordered region spans residues 1420–1475; it reads NSSTPAASAQPSGSGGFPFNQSPAAFTVGSNGKNVFSSSGTSFSGRKIKTAVRRRK. Phosphoserine occurs at positions 1457, 1461, and 1463. The segment covering 1465 to 1475 has biased composition (basic residues); the sequence is RKIKTAVRRRK.

The protein belongs to the NUP153 family. As to quaternary structure, part of the nuclear pore complex (NPC). Interacts with TPR (via coiled coil region); the interaction is direct and provides a link between the core structure and the TPR-containing nuclear basket of the nuclear pore complex (NPC). Interacts with HIKESHI. Interacts with SENP2. Interacts with XPO5. Interacts with RAN; the interaction occurs in a GTP- and GDP-independent manner. Interacts with MCM3AP isoform GANP; this interaction is required for GANP localization at the nuclear pore complex. Interacts with MAPK1. In terms of assembly, (Microbial infection) Interacts (via C-terminus) with HIV-1 capsid protein p24 (CA) (via N-terminus). (Microbial infection) Interacts with HIV-1 integrase; this interaction might play a role in nuclear import of HIV pre-integration complex. As to quaternary structure, (Microbial infection) Interacts with hepatitis B virus capsid protein; this interaction probably plays a role in nuclear import of HBV genome. In terms of assembly, (Microbial infection) Interacts with Epstein-barr virus BGLF4; this interaction allows BGLF4 nuclear entry. (Microbial infection) Interacts with HIV-2 virus protein vpx; this interaction might promote vpx nuclear entry. The cofactor is Zn(2+). Phosphorylated in interphase, hyperphosphorylated during mitosis. May play a role in the reversible disassembly of the nuclear pore complex during mitosis. Post-translationally, proteolytically degraded after poliovirus (PV) infection; degradation is partial and NCP- and TPR-binding domains withstand degradation. In terms of processing, O-glycosylated during cytokinesis at sites identical or close to phosphorylation sites, this interferes with the phosphorylation status.

It localises to the nucleus. It is found in the nucleus membrane. The protein localises to the nuclear pore complex. Its function is as follows. Component of the nuclear pore complex (NPC), a complex required for the trafficking across the nuclear envelope. Functions as a scaffolding element in the nuclear phase of the NPC essential for normal nucleocytoplasmic transport of proteins and mRNAs. Involved in the quality control and retention of unspliced mRNAs in the nucleus; in association with TPR, regulates the nuclear export of unspliced mRNA species bearing constitutive transport element (CTE) in a NXF1- and KHDRBS1-independent manner. Mediates TPR anchoring to the nuclear membrane at NPC. The repeat-containing domain may be involved in anchoring other components of the NPC to the pore membrane. Possible DNA-binding subunit of the nuclear pore complex (NPC). Functionally, (Microbial infection) Interacts with HIV-1 caspid protein P24 and thereby promotes the integration of the virus in the nucleus of non-dividing cells (in vitro). In terms of biological role, (Microbial infection) Binds HIV-2 protein vpx and thereby promotes the nuclear translocation of the lentiviral genome (in vitro). In Homo sapiens (Human), this protein is Nuclear pore complex protein Nup153 (NUP153).